A 660-amino-acid chain; its full sequence is Pro-secreted protein ORF2 (660 aa).

An N-terminal signal peptide occupies residues 1-23 (MRPRAVLLLLFVLLPMLPAPPAG). Disordered stretches follow at residues 19 to 43 (APPAGQPSGRRRGRRSGGAGGGFWG) and 64 to 125 (ADVV…VPDV). Positions 28–33 (RRRGRR) match the Nuclear localization signal motif. Positions 93 to 124 (RPSAAPRRRSAPAGAAPLTAVSPAPDTAPVPD) are enriched in low complexity. N-linked (GlcNAc...) asparagine; by host glycans are attached at residues Asn-137 and Asn-310. The interval 368–394 (IALTLFNLADTLLGGLPTELISSAGGQ) is particle formation. Residue Asn-562 is glycosylated (N-linked (GlcNAc...) asparagine; by host). Positions 585-610 (TTSLGAGPTSISAVGVLAPHSALAVL) are oligomerization.

Belongs to the hepevirus capsid protein family. Homodimer. In terms of assembly, self-assembles to form the capsid. The capsid is dominated by dimers that define the 30 morphological units. Interacts with phosphorylated protein ORF3. Interacts with host TMEM134. Interacts with host ASGR1 and ASGR2; these interactions facilitate infection of host hepatocytes. Post-translationally, cleaved by host protease in the N-terminus. In terms of processing, N-glycosylated. Not N-glycosylated. The C-terminus of the capsid protein ORF2 is truncated in non-enveloped virions shedded in feces, probably due to host proteases.

It localises to the secreted. The protein resides in the virion. The protein localises to the host cytoplasm. It is found in the host endoplasmic reticulum. Its subcellular location is the host Golgi apparatus. It localises to the host cell surface. The protein resides in the host nucleus. Its function is as follows. Plays a role in the inhibition of host antibody-mediated neutralization without blocking viral cell entry. In terms of biological role, forms an icosahedral capsid with a T=1 symmetry and a 34 nm diameter. The capsid is composed of 60 copies linked to each other. Binds to the 5' end of the genomic RNA to mediate genome encapsidation. Binds to heparin surface proteoglycans (HSPGs) to mediate viral entry. Additionally, the interactions with host ASGR1 and ASGR2 facilitate viral infection of hepatocytes. Inhibits IFN production by blocking host TBK1-induced IRF3 phosphorylation. The nuclear form probably modulates host gene expression. The sequence is that of Pro-secreted protein ORF2 from Hepatitis E virus genotype 3 (isolate Human/United States/US2) (HEV-3).